The primary structure comprises 761 residues: 52 kDa repressor of the inhibitor of the protein kinase (761 aa).

Residues 1–86 form a THAP-type zinc finger; sequence MPNFCAAPNC…LRDNAIPTIF (86 aa). Positions 116–132 are enriched in basic and acidic residues; that stretch reads QKKIDETSEQEQKHKET. The segment at 116 to 149 is disordered; that stretch reads QKKIDETSEQEQKHKETNNSNAQNPSEEEGEGQD. S566 carries the phosphoserine modification.

As to quaternary structure, interacts with DNAJC3, probably sequestring it.

Functionally, upstream regulator of interferon-induced serine/threonine protein kinase R (PKR). May block the PKR-inhibitory function of DNAJC3, resulting in restoration of kinase activity and suppression of cell growth. This Homo sapiens (Human) protein is 52 kDa repressor of the inhibitor of the protein kinase.